A 502-amino-acid polypeptide reads, in one-letter code: Peroxisomal catalase (502 aa).

Active-site residues include H64 and N137. A heme-binding site is contributed by Y347. The Microbody targeting signal motif lies at 500 to 502 (AKM).

This sequence belongs to the catalase family. It depends on heme as a cofactor.

The protein resides in the peroxisome matrix. It carries out the reaction 2 H2O2 = O2 + 2 H2O. Its function is as follows. Catalyzes the degradation of hydrogen peroxide (H(2)O(2)) generated by peroxisomal oxidases to water and oxygen, thereby protecting cells from the toxic effects of hydrogen peroxide. This Toxoplasma gondii protein is Peroxisomal catalase.